A 224-amino-acid chain; its full sequence is 2-C-methyl-D-erythritol 4-phosphate cytidylyltransferase (224 aa).

The protein belongs to the IspD/TarI cytidylyltransferase family. IspD subfamily.

It carries out the reaction 2-C-methyl-D-erythritol 4-phosphate + CTP + H(+) = 4-CDP-2-C-methyl-D-erythritol + diphosphate. It functions in the pathway isoprenoid biosynthesis; isopentenyl diphosphate biosynthesis via DXP pathway; isopentenyl diphosphate from 1-deoxy-D-xylulose 5-phosphate: step 2/6. Its function is as follows. Catalyzes the formation of 4-diphosphocytidyl-2-C-methyl-D-erythritol from CTP and 2-C-methyl-D-erythritol 4-phosphate (MEP). The polypeptide is 2-C-methyl-D-erythritol 4-phosphate cytidylyltransferase (Caldicellulosiruptor bescii (strain ATCC BAA-1888 / DSM 6725 / KCTC 15123 / Z-1320) (Anaerocellum thermophilum)).